The sequence spans 190 residues: GTP cyclohydrolase 1 (190 aa).

Cys-80, His-83, and Cys-151 together coordinate Zn(2+).

This sequence belongs to the GTP cyclohydrolase I family. Toroid-shaped homodecamer, composed of two pentamers of five dimers.

The catalysed reaction is GTP + H2O = 7,8-dihydroneopterin 3'-triphosphate + formate + H(+). It participates in cofactor biosynthesis; 7,8-dihydroneopterin triphosphate biosynthesis; 7,8-dihydroneopterin triphosphate from GTP: step 1/1. In Rickettsia prowazekii (strain Madrid E), this protein is GTP cyclohydrolase 1 (folE).